A 713-amino-acid chain; its full sequence is Polyribonucleotide nucleotidyltransferase (713 aa).

Mg(2+) contacts are provided by aspartate 498 and aspartate 504. Residues 565 to 631 form the KH domain; that stretch reads PRILSLKVPV…RIEDLTREAK (67 aa). An S1 motif domain is found at 633 to 701; the sequence is GEIYEGTVTR…ERGKIDLIRP (69 aa).

This sequence belongs to the polyribonucleotide nucleotidyltransferase family. Mg(2+) serves as cofactor.

It is found in the cytoplasm. The enzyme catalyses RNA(n+1) + phosphate = RNA(n) + a ribonucleoside 5'-diphosphate. Its function is as follows. Involved in mRNA degradation. Catalyzes the phosphorolysis of single-stranded polyribonucleotides processively in the 3'- to 5'-direction. The protein is Polyribonucleotide nucleotidyltransferase of Thermus thermophilus.